Consider the following 233-residue polypeptide: Endonuclease V (233 aa).

2 residues coordinate Mg(2+): Asp-48 and Asp-116.

The protein belongs to the endonuclease V family. Mg(2+) is required as a cofactor.

It localises to the cytoplasm. It carries out the reaction Endonucleolytic cleavage at apurinic or apyrimidinic sites to products with a 5'-phosphate.. Functionally, DNA repair enzyme involved in the repair of deaminated bases. Selectively cleaves double-stranded DNA at the second phosphodiester bond 3' to a deoxyinosine leaving behind the intact lesion on the nicked DNA. The sequence is that of Endonuclease V from Streptomyces coelicolor (strain ATCC BAA-471 / A3(2) / M145).